The sequence spans 267 residues: Large ribosomal subunit protein uL4 (267 aa).

It belongs to the universal ribosomal protein uL4 family. In terms of assembly, part of the 50S ribosomal subunit.

Its function is as follows. One of the primary rRNA binding proteins, this protein initially binds near the 5'-end of the 23S rRNA. It is important during the early stages of 50S assembly. It makes multiple contacts with different domains of the 23S rRNA in the assembled 50S subunit and ribosome. Functionally, forms part of the polypeptide exit tunnel. The sequence is that of Large ribosomal subunit protein uL4 from Saccharolobus islandicus (strain M.16.27) (Sulfolobus islandicus).